The primary structure comprises 293 residues: Elongation factor Ts (293 aa).

Residues 80 to 83 form an involved in Mg(2+) ion dislocation from EF-Tu region; the sequence is TDFV.

This sequence belongs to the EF-Ts family.

It is found in the cytoplasm. Associates with the EF-Tu.GDP complex and induces the exchange of GDP to GTP. It remains bound to the aminoacyl-tRNA.EF-Tu.GTP complex up to the GTP hydrolysis stage on the ribosome. This Aeromonas salmonicida (strain A449) protein is Elongation factor Ts.